Here is a 517-residue protein sequence, read N- to C-terminus: MEILVYIIIGIAIFILSLLVGINIGNRRMISTLATKKEELEVEIKNKQKEIEKMLKNAEEEAKALKQKELLEAKEEIHRLRQEFDSEAKQQREELKANEERLIRKEESLAKKEENLEKLKEKLEVQHENVLKLEKELETKLNEIAKMTEEEARQVVINEARDKYEREIAQKFKEIKDHYEEESKKYARWVITTAIQRYASDVTNEITTSTVALPTDDMKGRIIGREGRNIRTFEKLTGTDLIIDDTPEIVVISSFNPLRREIAKRTLEMLVADGRIHPARIEELYEKSKNEIQEYIKEVGKEAVMRVGIKQPHLEIIKLLGRLKFRTSYGQDVLEHSIEVAQFAGMMASELGLNVELAKRAALLHDLGKAVDHEVEGSHAIVGGQIAKRYGEKLEVVNAIQYHHNEVDPMTPEAVLVAASDALSASRPGARKETLENYIRRIEQLEEIAKSFRYVDKAYAIQAGRELRIIVQPDKVEDEIAEKLAHDISVQIEEKVQYPGVIKVTVIREKRSISYAS.

Residues 2–22 (EILVYIIIGIAIFILSLLVGI) form a helical membrane-spanning segment. The 61-residue stretch at 207-267 (TTSTVALPTD…LRREIAKRTL (61 aa)) folds into the KH domain. One can recognise an HD domain in the interval 333–426 (VLEHSIEVAQ…VAASDALSAS (94 aa)).

Belongs to the RNase Y family.

The protein resides in the cell membrane. Its function is as follows. Endoribonuclease that initiates mRNA decay. The polypeptide is Ribonuclease Y (Petrotoga mobilis (strain DSM 10674 / SJ95)).